We begin with the raw amino-acid sequence, 324 residues long: Glutathione synthetase (324 aa).

The ATP-grasp domain occupies 133-317 (KMYALQFTKA…LAHQVIQWVE (185 aa)). 159-215 (VEAKGATVLKPLGNKAGEGILFLQAGDRNFNSIVELSTQQGRLPVMVQTYLPEAKEG) serves as a coordination point for ATP. The Mg(2+) site is built by Glu288 and Asn290.

The protein belongs to the prokaryotic GSH synthase family. It depends on Mg(2+) as a cofactor. Mn(2+) is required as a cofactor.

The enzyme catalyses gamma-L-glutamyl-L-cysteine + glycine + ATP = glutathione + ADP + phosphate + H(+). The protein operates within sulfur metabolism; glutathione biosynthesis; glutathione from L-cysteine and L-glutamate: step 2/2. This chain is Glutathione synthetase, found in Nostoc sp. (strain PCC 7120 / SAG 25.82 / UTEX 2576).